Consider the following 246-residue polypeptide: uncharacterized protein (246 aa).

This is an uncharacterized protein from Borreliella burgdorferi (strain ATCC 35210 / DSM 4680 / CIP 102532 / B31) (Borrelia burgdorferi).